Here is a 206-residue protein sequence, read N- to C-terminus: Transmembrane emp24 domain-containing protein bai (206 aa).

The signal sequence occupies residues M1–S20. Topologically, residues V21 to R172 are lumenal. A GOLD domain is found at Q30–R140. The helical transmembrane segment at V173–L193 threads the bilayer. At Y194 to E206 the chain is on the cytoplasmic side.

It belongs to the EMP24/GP25L family.

It is found in the membrane. Eca and bai are essential, though not redundant, for dorsoventral patterning of the embryo. Specifically required during early embryogenesis for the activity of maternal tkv, while the zygotic tkv is not affected. The protein is Transmembrane emp24 domain-containing protein bai of Drosophila willistoni (Fruit fly).